Consider the following 224-residue polypeptide: Transcription factor MYB1 (224 aa).

HTH myb-type domains are found at residues 10-66 (LGRV…KPSI) and 67-117 (KRGH…YKKH). 2 DNA-binding regions (H-T-H motif) span residues 38-62 (WKRVPERAGLNRCRKSCRWRWLNYL) and 90-113 (WSLIAAKLPGRTINDVKNYCNTHL).

It localises to the nucleus. Its function is as follows. Activates DODA1 and CYP76AD1 in the betalain red pigment pathway. This is Transcription factor MYB1 from Beta vulgaris (Sugar beet).